The primary structure comprises 334 residues: Glutaredoxin-3 (334 aa).

At A2 the chain carries N-acetylalanine. Residues 2-116 (AGGAAEAAAA…LTKKVQRHAS (115 aa)) enclose the Thioredoxin domain. A disordered region spans residues 110–131 (KVQRHASSGSFSPSGSEHPKED). 2 positions are modified to phosphoserine: S116 and S119. A compositionally biased stretch (low complexity) spans 116–125 (SSGSFSPSGS). Glutaredoxin domains lie at 145 to 235 (CMLF…PKLE) and 236 to 334 (ERLK…KGEN). 2 residues coordinate [2Fe-2S] cluster: C158 and C260.

As to quaternary structure, homodimer; the homodimer is independent of 2Fe-2S clusters. Heterotrimer; forms a heterotrimeric complex composed by two BOLA2 molecules and one GLRX3 molecule; linked by [2Fe-2S] clusters. Interacts (via N-terminus) with PRKCQ/PKC-theta. Interacts (via C-terminus) with CSRP3. Interacts with CSRP2.

It is found in the cytoplasm. The protein resides in the cytosol. It localises to the cell cortex. The protein localises to the myofibril. Its subcellular location is the sarcomere. It is found in the z line. Its function is as follows. Together with BOLA2, acts as a cytosolic iron-sulfur (Fe-S) cluster assembly factor that facilitates [2Fe-2S] cluster insertion into a subset of cytosolic proteins. Acts as a critical negative regulator of cardiac hypertrophy and a positive inotropic regulator. Required for hemoglobin maturation. Does not possess any thyoredoxin activity since it lacks the conserved motif that is essential for catalytic activity. This chain is Glutaredoxin-3 (GLRX3), found in Bos taurus (Bovine).